The sequence spans 87 residues: Small ribosomal subunit protein bS20 (87 aa).

Positions 1–25 (MANSAQARKRARQNISHRNRNMSLR) are disordered. Over residues 7–20 (ARKRARQNISHRNR) the composition is skewed to basic residues.

The protein belongs to the bacterial ribosomal protein bS20 family.

Functionally, binds directly to 16S ribosomal RNA. This chain is Small ribosomal subunit protein bS20, found in Nitrosospira multiformis (strain ATCC 25196 / NCIMB 11849 / C 71).